A 589-amino-acid chain; its full sequence is Probable ATP-dependent RNA helicase DDX59 (589 aa).

Disordered regions lie at residues 1-36 (MFVPRSLKLKRNSNDDLKSCEAKKSKPEAAGLQLEG) and 48-98 (KEAV…SKTQ). The span at 12 to 27 (NSNDDLKSCEAKKSKP) shows a compositional bias: basic and acidic residues. Residue Lys26 forms a Glycyl lysine isopeptide (Lys-Gly) (interchain with G-Cter in SUMO2) linkage. Ser64 is subject to Phosphoserine. A compositionally biased stretch (basic and acidic residues) spans 80–91 (GVKDSHPSEEPV). Residues 104–133 (GEPVCVVCGRYGEYICDKTDEDVCSLECKA) form an HIT-type zinc finger. Residues Ser156 and Ser160 each carry the phosphoserine modification. Residues 203–231 (IDFEHCGFPETLNQNLKKSGYEVPTPIQM) carry the Q motif motif. The Helicase ATP-binding domain occupies 234–375 (IPVGLLGRDI…DQLLHNPVRI (142 aa)). 247–254 (ADTGSGKT) contacts ATP. The DEAD box signature appears at 323-326 (VKAD). The Helicase C-terminal domain occupies 399-549 (KKKKLFEILN…ILPPQLLNSP (151 aa)).

Belongs to the DEAD box helicase family. DDX59 subfamily. Interacts (via HIT-type zinc finger) with the RUVBL1/RUVBL2 complex in the presence of ADP.

The protein resides in the cytoplasm. The protein localises to the nucleus. The enzyme catalyses ATP + H2O = ADP + phosphate + H(+). The polypeptide is Probable ATP-dependent RNA helicase DDX59 (Ddx59) (Rattus norvegicus (Rat)).